A 186-amino-acid chain; its full sequence is Shikimate kinase (186 aa).

21–26 (GVGKTT) is an ATP binding site. A Mg(2+)-binding site is contributed by threonine 25. Aspartate 43, arginine 67, and glycine 90 together coordinate substrate. Residue arginine 129 coordinates ATP. Residue arginine 147 participates in substrate binding.

This sequence belongs to the shikimate kinase family. Monomer. Mg(2+) is required as a cofactor.

Its subcellular location is the cytoplasm. The enzyme catalyses shikimate + ATP = 3-phosphoshikimate + ADP + H(+). It participates in metabolic intermediate biosynthesis; chorismate biosynthesis; chorismate from D-erythrose 4-phosphate and phosphoenolpyruvate: step 5/7. Its function is as follows. Catalyzes the specific phosphorylation of the 3-hydroxyl group of shikimic acid using ATP as a cosubstrate. This is Shikimate kinase from Bacillus subtilis (strain 168).